The following is a 124-amino-acid chain: Large ribosomal subunit protein uL18 (124 aa).

This sequence belongs to the universal ribosomal protein uL18 family. Part of the 50S ribosomal subunit; part of the 5S rRNA/L5/L18/L25 subcomplex. Contacts the 5S and 23S rRNAs.

In terms of biological role, this is one of the proteins that bind and probably mediate the attachment of the 5S RNA into the large ribosomal subunit, where it forms part of the central protuberance. The protein is Large ribosomal subunit protein uL18 of Orientia tsutsugamushi (strain Ikeda) (Rickettsia tsutsugamushi).